The sequence spans 471 residues: Putative multidrug resistance protein MdtD (471 aa).

Residues 1-11 (MTDLPDSTRWQ) are Periplasmic-facing. A helical membrane pass occupies residues 12–32 (LWIVAFGFFMQSLDTTIVNTA). Topologically, residues 33-48 (LPSMAQSLGESPLHMH) are cytoplasmic. Residues 49–69 (MVIVSYVLTVAVMLPASGWLA) form a helical membrane-spanning segment. The Periplasmic segment spans residues 70-76 (DKVGVRN). The chain crosses the membrane as a helical span at residues 77–97 (IFFTAIVLFTLGSLFCALSGT). At 98 to 101 (LNEL) the chain is on the cytoplasmic side. A helical membrane pass occupies residues 102-124 (LLARALQGVGGAMMVPVGRLTVM). Over 125 to 137 (KIVPREQYMAAMT) the chain is Periplasmic. The helical transmembrane segment at 138 to 158 (FVTLPGQVGPLLGPALGGLLV) threads the bilayer. At 159-164 (EYASWH) the chain is on the cytoplasmic side. A helical membrane pass occupies residues 165-185 (WIFLINIPVGIIGAIATLLLM). The Periplasmic segment spans residues 186-196 (PNYTMQTRRFD). Residues 197-217 (LSGFLLLAVGMAVLTLALDGS) form a helical membrane-spanning segment. At 218 to 224 (KGTGLSP) the chain is on the cytoplasmic side. The chain crosses the membrane as a helical span at residues 225–245 (LTIAGLVAVGVVALVLYLLHA). Residues 246–262 (RNNNRALFSLKLFRTRT) lie on the Periplasmic side of the membrane. Residues 263 to 283 (FSLGLAGSFAGRIGSGMLPFM) form a helical membrane-spanning segment. The Cytoplasmic portion of the chain corresponds to 284-285 (TP). The helical transmembrane segment at 286–306 (VFLQIGLGFSPFHAGLMMIPM) threads the bilayer. Over 307-341 (VLGSMGMKRIVVQVVNRFGYRRVLVATTLGLSLVT) the chain is Periplasmic. Residues 342–362 (LLFMTTALLGWYYVLPFVLFL) form a helical membrane-spanning segment. The Cytoplasmic portion of the chain corresponds to 363-395 (QGMVNSTRFSSMNTLTLKDLPDNLASSGNSLLS). Residues 396-416 (MIMQLSMSIGVTIAGLLLGLF) form a helical membrane-spanning segment. At 417-430 (GSQHVSVDSGTTQT) the chain is on the periplasmic side. The chain crosses the membrane as a helical span at residues 431 to 451 (VFMYTWLSMALIIALPAFIFA). Residues 452–471 (RVPNDTHQNVAISRRKRSAQ) are Cytoplasmic-facing.

It belongs to the major facilitator superfamily. TCR/Tet family.

The protein localises to the cell inner membrane. In Escherichia coli (strain K12 / MC4100 / BW2952), this protein is Putative multidrug resistance protein MdtD.